We begin with the raw amino-acid sequence, 212 residues long: Ribosomal RNA small subunit methyltransferase G (212 aa).

S-adenosyl-L-methionine-binding positions include Gly-80, Leu-85, 131–132 (AE), and Arg-146.

This sequence belongs to the methyltransferase superfamily. RNA methyltransferase RsmG family.

The protein resides in the cytoplasm. The catalysed reaction is guanosine(527) in 16S rRNA + S-adenosyl-L-methionine = N(7)-methylguanosine(527) in 16S rRNA + S-adenosyl-L-homocysteine. In terms of biological role, specifically methylates the N7 position of guanine in position 527 of 16S rRNA. The sequence is that of Ribosomal RNA small subunit methyltransferase G from Stenotrophomonas maltophilia (strain K279a).